The chain runs to 155 residues: SsrA-binding protein (155 aa).

A disordered region spans residues 135–155 (KRESLKRRQDQRDIQRAMKNY).

This sequence belongs to the SmpB family.

Its subcellular location is the cytoplasm. Required for rescue of stalled ribosomes mediated by trans-translation. Binds to transfer-messenger RNA (tmRNA), required for stable association of tmRNA with ribosomes. tmRNA and SmpB together mimic tRNA shape, replacing the anticodon stem-loop with SmpB. tmRNA is encoded by the ssrA gene; the 2 termini fold to resemble tRNA(Ala) and it encodes a 'tag peptide', a short internal open reading frame. During trans-translation Ala-aminoacylated tmRNA acts like a tRNA, entering the A-site of stalled ribosomes, displacing the stalled mRNA. The ribosome then switches to translate the ORF on the tmRNA; the nascent peptide is terminated with the 'tag peptide' encoded by the tmRNA and targeted for degradation. The ribosome is freed to recommence translation, which seems to be the essential function of trans-translation. The polypeptide is SsrA-binding protein (Trichormus variabilis (strain ATCC 29413 / PCC 7937) (Anabaena variabilis)).